A 291-amino-acid polypeptide reads, in one-letter code: Elongation factor Ts (291 aa).

The segment at 80-83 (TDFV) is involved in Mg(2+) ion dislocation from EF-Tu.

The protein belongs to the EF-Ts family.

It is found in the cytoplasm. Associates with the EF-Tu.GDP complex and induces the exchange of GDP to GTP. It remains bound to the aminoacyl-tRNA.EF-Tu.GTP complex up to the GTP hydrolysis stage on the ribosome. The chain is Elongation factor Ts from Limosilactobacillus reuteri (strain DSM 20016) (Lactobacillus reuteri).